A 181-amino-acid polypeptide reads, in one-letter code: UPF0232 protein SAV_4320 (181 aa).

A compositionally biased stretch (polar residues) spans 1 to 10 (MSDTPAQTPE). 2 disordered regions span residues 1 to 64 (MSDT…GRDP) and 156 to 181 (QGPG…DTYG). Basic and acidic residues predominate over residues 30-39 (AAKEQARARG).

This sequence belongs to the UPF0232 family.

The polypeptide is UPF0232 protein SAV_4320 (Streptomyces avermitilis (strain ATCC 31267 / DSM 46492 / JCM 5070 / NBRC 14893 / NCIMB 12804 / NRRL 8165 / MA-4680)).